Consider the following 561-residue polypeptide: Potassium-transporting ATPase potassium-binding subunit (561 aa).

11 helical membrane passes run 5-25 (IELFTMIAIIVLLTKPLGTYM), 63-83 (KYALTFLLVNMVMMIITYFIL), 103-122 (LAFNTVISFMTNTNLQHYAG), 133-153 (IVIVFLMFTSAASGLVTAAAI), 179-199 (LLPISMLATLILVWQGVPQTF), 255-275 (IEMLLMMLLPTSLIYTYGLMI), 281-301 (ALVLYISLFVIFILLAVGAVY), 380-400 (AGLQNIIMYTILTVFLTGLMV), 418-438 (LIALAILVHPFLILFSSALTV), 485-505 (IMTGLVMFFGRYITIILMLAV), and 531-551 (AIFIAVVLIVGALTFFPAVIL).

This sequence belongs to the KdpA family. As to quaternary structure, the system is composed of three essential subunits: KdpA, KdpB and KdpC.

The protein resides in the cell membrane. Part of the high-affinity ATP-driven potassium transport (or Kdp) system, which catalyzes the hydrolysis of ATP coupled with the electrogenic transport of potassium into the cytoplasm. This subunit binds the extracellular potassium ions and delivers the ions to the membrane domain of KdpB through an intramembrane tunnel. This Caldanaerobacter subterraneus subsp. tengcongensis (strain DSM 15242 / JCM 11007 / NBRC 100824 / MB4) (Thermoanaerobacter tengcongensis) protein is Potassium-transporting ATPase potassium-binding subunit.